The chain runs to 195 residues: MVKEIILASKSGVRKKILEENNIQFRVEPSNVDEDSVKESLLKEKVTPTIISKNLAELKANKISQKFTEEIVLGADSVIDLEGKIISKPNDREEALEILKRMNGKTHQLISSVCISRGGSMIWNYTDKASLTMKNMTFLELENYLKKISDKDLYAYNVYQIEGEGRNLFSKIEGDEDTIMGLPVKKIKEYLKIIK.

Residue Asp76 is the Proton acceptor of the active site.

It belongs to the Maf family. The cofactor is a divalent metal cation.

Its subcellular location is the cytoplasm. It carries out the reaction a ribonucleoside 5'-triphosphate + H2O = a ribonucleoside 5'-phosphate + diphosphate + H(+). The catalysed reaction is a 2'-deoxyribonucleoside 5'-triphosphate + H2O = a 2'-deoxyribonucleoside 5'-phosphate + diphosphate + H(+). Functionally, nucleoside triphosphate pyrophosphatase. May have a dual role in cell division arrest and in preventing the incorporation of modified nucleotides into cellular nucleic acids. In Pelagibacter ubique (strain HTCC1062), this protein is Nucleoside triphosphate pyrophosphatase.